The primary structure comprises 150 residues: Large ribosomal subunit protein bL9 (150 aa).

Belongs to the bacterial ribosomal protein bL9 family.

Functionally, binds to the 23S rRNA. This Vesicomyosocius okutanii subsp. Calyptogena okutanii (strain HA) protein is Large ribosomal subunit protein bL9.